The primary structure comprises 60 residues: Large ribosomal subunit protein uL30 (60 aa).

This sequence belongs to the universal ribosomal protein uL30 family. As to quaternary structure, part of the 50S ribosomal subunit.

The protein is Large ribosomal subunit protein uL30 of Thermus thermophilus (strain ATCC BAA-163 / DSM 7039 / HB27).